The sequence spans 1075 residues: Error-prone DNA polymerase (1075 aa).

The protein belongs to the DNA polymerase type-C family. DnaE2 subfamily.

Its subcellular location is the cytoplasm. The catalysed reaction is DNA(n) + a 2'-deoxyribonucleoside 5'-triphosphate = DNA(n+1) + diphosphate. In terms of biological role, DNA polymerase involved in damage-induced mutagenesis and translesion synthesis (TLS). It is not the major replicative DNA polymerase. The chain is Error-prone DNA polymerase from Ralstonia nicotianae (strain ATCC BAA-1114 / GMI1000) (Ralstonia solanacearum).